Consider the following 507-residue polypeptide: Peroxisomal membrane protein PEX14 (507 aa).

Polar residues-rich tracts occupy residues 1-10 and 32-48; these read MATHQQTQPP and EVQQ…SVFK. The segment at 1-52 is disordered; sequence MATHQQTQPPSDFPALADENSQIPEATKPANEVQQATIAQDPPTSVFKNSEP. Topologically, residues 1–152 are peroxisomal; sequence MATHQQTQPP…QAAFLSRFRW (152 aa). 2 involved in interaction with PEX5 regions span residues 58 to 65 and 78 to 97; these read IQNAIKFL and RRSF…EAFR. Residues 153-173 traverse the membrane as a helical segment; that stretch reads YHAILAVGVLAASGAGTAVFI. Residues 174 to 507 are Cytoplasmic-facing; it reads KRSLIPRFKS…EQQHISQEGN (334 aa). Positions 288 to 302 are enriched in polar residues; that stretch reads VTTARKPYTNGSNVD. Disordered stretches follow at residues 288-329, 344-394, 409-435, and 448-507; these read VTTA…PKSY, NIRE…NPRS, ANQN…QPPP, and PKPQ…QEGN. Over residues 308 to 322 the composition is skewed to low complexity; it reads ARSASPPAAPADSSA. Positions 378-394 are enriched in polar residues; that stretch reads QDESSNGQWWQQKNPRS.

This sequence belongs to the peroxin-14 family. Interacts with PEX13; forming the PEX13-PEX14 docking complex. Interacts with PEX5 (via WxxxF/Y motifs). As to expression, expressed in flowers, siliques, leaves and roots.

The protein localises to the peroxisome membrane. Functionally, component of the PEX13-PEX14 docking complex, a translocon channel that specifically mediates the import of peroxisomal cargo proteins bound to PEX5 receptor. The PEX13-PEX14 docking complex forms a large import pore which can be opened to a diameter of about 9 nm. Mechanistically, PEX5 receptor along with cargo proteins associates with the PEX14 subunit of the PEX13-PEX14 docking complex in the cytosol, leading to the insertion of the receptor into the organelle membrane with the concomitant translocation of the cargo into the peroxisome matrix. This Arabidopsis thaliana (Mouse-ear cress) protein is Peroxisomal membrane protein PEX14.